A 272-amino-acid chain; its full sequence is Ribosomal RNA small subunit methyltransferase J (272 aa).

Residues arginine 120–aspartate 121, glutamate 136–arginine 137, serine 171–serine 172, and aspartate 188 each bind S-adenosyl-L-methionine.

The protein belongs to the methyltransferase superfamily. RsmJ family.

The protein resides in the cytoplasm. The enzyme catalyses guanosine(1516) in 16S rRNA + S-adenosyl-L-methionine = N(2)-methylguanosine(1516) in 16S rRNA + S-adenosyl-L-homocysteine + H(+). Specifically methylates the guanosine in position 1516 of 16S rRNA. This Colwellia psychrerythraea (strain 34H / ATCC BAA-681) (Vibrio psychroerythus) protein is Ribosomal RNA small subunit methyltransferase J.